The following is a 257-amino-acid chain: UPF0246 protein CPS_4102 (257 aa).

It belongs to the UPF0246 family.

The protein is UPF0246 protein CPS_4102 of Colwellia psychrerythraea (strain 34H / ATCC BAA-681) (Vibrio psychroerythus).